Consider the following 449-residue polypeptide: Probable ubiquitin carboxyl-terminal hydrolase 8 (449 aa).

The segment at 6–113 (EGCQHLKLKP…FKIKNIKAWQ (108 aa)) adopts a UBP-type zinc-finger fold. C8, H10, C38, C41, C51, C54, C59, H64, H68, H74, C87, and C90 together coordinate Zn(2+). Residues 145–435 (RGIQNLGATC…QAYLLFYHER (291 aa)) form the USP domain. Catalysis depends on C154, which acts as the Nucleophile. Zn(2+) contacts are provided by H178, C183, C188, C191, H246, C257, C259, H262, C275, C278, C317, and C320. H395 functions as the Proton acceptor in the catalytic mechanism.

This sequence belongs to the peptidase C19 family. UBP8 subfamily. Component of the 1.8 MDa SAGA (Spt-Ada-Gcn5 acetyltransferase) complex, which is composed of 19 subunits tra1, spt7, taf5, ngg1/ada3, sgf73, spt20, spt8, taf12, taf6, hfi1/ada1, ubp8, gcn5, ada2, spt3, sgf29, taf10, taf9, sgf11 and sus1. The SAGA complex is composed of 4 modules, namely the HAT (histone acetyltransferase) module (gcn5, ada2, ngg1/ada3 and sgf29), the DUB (deubiquitinating) module (ubp8, sgf11, sgf73 and sus1), the core or TAF (TBP-associated factor) module (taf5, taf6, taf9, taf10 and taf12), and the Tra1 or SPT (Suppressor of Ty) module (tra1, hfi1/ada1, spt3, spt7, spt8 and spt20). The Tra1/SPT module binds activators, the core module recruits TBP (TATA-binding protein), the HAT module contains the histone H3 acetyltransferase gcn5, and the DUB module comprises the histone H2B deubiquitinase ubp8.

The protein localises to the nucleus. Its subcellular location is the nucleoplasm. It carries out the reaction Thiol-dependent hydrolysis of ester, thioester, amide, peptide and isopeptide bonds formed by the C-terminal Gly of ubiquitin (a 76-residue protein attached to proteins as an intracellular targeting signal).. Histone deubiquitinating enzyme component of the transcription coactivator SAGA complex. SAGA acts as a general cofactor required for essentially all RNA polymerase II transcription. At the promoters, SAGA is required for transcription pre-initiation complex (PIC) recruitment. It influences RNA polymerase II transcriptional activity through different activities such as TBP interaction (via core/TAF module) and promoter selectivity, interaction with transcription activators (via Tra1/SPT module), and chromatin modification through histone acetylation (via HAT module) and deubiquitination (via DUB module). SAGA preferentially acetylates histones H3 (to form H3K9ac, H3K14ac, H3K18ac and H3K23ac) and H2B and deubiquitinates histone H2B. SAGA interacts with DNA via upstream activating sequences (UASs). Within the DUB module, the correctly positioned zinc finger domains of sgf11 and sgf73 are both required to fully activate the ubiquitin hydrolase ubp8. The DUB module is also linked to the splicing efficiency of many transcripts. This chain is Probable ubiquitin carboxyl-terminal hydrolase 8 (ubp8), found in Schizosaccharomyces pombe (strain 972 / ATCC 24843) (Fission yeast).